Reading from the N-terminus, the 429-residue chain is MADTTIEAITAREVLDSRGNPTIEVDVYLESGDMGRAIVPSGASTGAFEALELRDGDKSRYGGKGVLKAVENVNTTIAEALEGEDAADQMRIDRMLIDLDGAENKGRLGANAILGVSLACAKAAAAAHGLPLYRYLGGIHAHVLPVPMMNILNGGKHAQNSTDFQEFMIMPVGAPSFREALRWGSEIYQSLKKVIHDRGGSTNVGDEGGFAPSLPTNEAALQIIVEAVERAGYQLGDQVMLAMDPACTELYKDGKYHLEREGRSLTSAEMVEYWADIAARYPLISLEDGLAEEDWEGWKLLRARLGDRIQLVGDDFLVTNVKRLARAISEQAANSILIKLNQIGTLTETLDAITMANRAGWTAVVSHRSGESEDVTIADLVVATNAGQIKTGAPARTDRVAKYNQLLRIEEELDSAAHYAGMGAFRVAR.

Q165 lines the (2R)-2-phosphoglycerate pocket. Residue E207 is the Proton donor of the active site. Mg(2+) contacts are provided by D244, E287, and D314. (2R)-2-phosphoglycerate contacts are provided by K339, R368, S369, and K390. Catalysis depends on K339, which acts as the Proton acceptor.

The protein belongs to the enolase family. The cofactor is Mg(2+).

The protein localises to the cytoplasm. It is found in the secreted. The protein resides in the cell surface. The catalysed reaction is (2R)-2-phosphoglycerate = phosphoenolpyruvate + H2O. It participates in carbohydrate degradation; glycolysis; pyruvate from D-glyceraldehyde 3-phosphate: step 4/5. Functionally, catalyzes the reversible conversion of 2-phosphoglycerate (2-PG) into phosphoenolpyruvate (PEP). It is essential for the degradation of carbohydrates via glycolysis. The protein is Enolase of Roseiflexus castenholzii (strain DSM 13941 / HLO8).